The following is a 358-amino-acid chain: DnaJ homolog subfamily B member 11 (358 aa).

An N-terminal signal peptide occupies residues 1–22 (MAPQNLSTFCLLLLYLIGAVIA). A J domain is found at 25–90 (DFYKILGVPR…EKRKQYDTYG (66 aa)). T188 is subject to Phosphothreonine. Residue N261 is glycosylated (N-linked (GlcNAc...) asparagine).

Part of a large chaperone multiprotein complex comprising DNAJB11, HSP90B1, HSPA5, HYOU, PDIA2, PDIA4, PDIA6, PPIB, SDF2L1, UGGT1 and very small amounts of ERP29, but not, or at very low levels, CALR nor CANX. Binds to denatured substrates in an ATP-independent manner. Interacts via the J domain with HSPA5 in an ATP-dependent manner. Post-translationally, contains high-mannose Endo H-sensitive carbohydrates. Cys-169, Cys-171, Cys-193 and Cys-196 form intramolecular disulfide bonds. The preferential partner for each Cys is not known. In terms of processing, thr-188 was reported to be phosphorylated upon DNA damage by ATM or ATR; however as this position has been shown to be in the ER lumen, the in vivo relevance is not proven. In terms of tissue distribution, widely expressed.

Its subcellular location is the endoplasmic reticulum lumen. Functionally, as a co-chaperone for HSPA5 it is required for proper folding, trafficking or degradation of proteins. Binds directly to both unfolded proteins that are substrates for ERAD and nascent unfolded peptide chains, but dissociates from the HSPA5-unfolded protein complex before folding is completed. May help recruiting HSPA5 and other chaperones to the substrate. Stimulates HSPA5 ATPase activity. It is necessary for maturation and correct trafficking of PKD1. This chain is DnaJ homolog subfamily B member 11 (DNAJB11), found in Homo sapiens (Human).